Consider the following 206-residue polypeptide: MIGRLSGTILEKQPPEVLIDVGGIGYEVQMPMSCFYELPEVGQAAVICTHFIVREDAQLLYGFNKKSERELFREVIKANGVGPKLGLAILSAMTASQFVLSVENEDITTLVKIPGVGKKTAERLVIEMRDRLKGWGEGDLFTPASDAAASNAEIQKYSSARAEDEAVSALIALGYKALQAAKVVSQVVKPEMSSENIIREALRSMV.

A domain I region spans residues Met1–Asn64. A domain II region spans residues Lys65–Pro143. The segment at Ala144–Tyr157 is flexible linker. Positions Ser158–Val206 are domain III.

The protein belongs to the RuvA family. As to quaternary structure, homotetramer. Forms an RuvA(8)-RuvB(12)-Holliday junction (HJ) complex. HJ DNA is sandwiched between 2 RuvA tetramers; dsDNA enters through RuvA and exits via RuvB. An RuvB hexamer assembles on each DNA strand where it exits the tetramer. Each RuvB hexamer is contacted by two RuvA subunits (via domain III) on 2 adjacent RuvB subunits; this complex drives branch migration. In the full resolvosome a probable DNA-RuvA(4)-RuvB(12)-RuvC(2) complex forms which resolves the HJ.

The protein localises to the cytoplasm. In terms of biological role, the RuvA-RuvB-RuvC complex processes Holliday junction (HJ) DNA during genetic recombination and DNA repair, while the RuvA-RuvB complex plays an important role in the rescue of blocked DNA replication forks via replication fork reversal (RFR). RuvA specifically binds to HJ cruciform DNA, conferring on it an open structure. The RuvB hexamer acts as an ATP-dependent pump, pulling dsDNA into and through the RuvAB complex. HJ branch migration allows RuvC to scan DNA until it finds its consensus sequence, where it cleaves and resolves the cruciform DNA. This chain is Holliday junction branch migration complex subunit RuvA, found in Photobacterium profundum (strain SS9).